The primary structure comprises 716 residues: Dynein axonemal intermediate chain 7 (716 aa).

It belongs to the DNAI7 family. As to quaternary structure, part of the multisubunit axonemal dynein complex formed at least of two heavy chains and a number of intermediate and light chains. Interacts with tubulin. Associates with microtubule. Ubiquitinated. Ubiquitination leads to its degradation through the 26S proteasome. Ubiquitin-proteasome-mediated DNAI7 degradation occurs in mitosis.

It is found in the cell projection. Its subcellular location is the cilium. The protein resides in the cytoplasm. Via its association with the multisubunit axonemal dynein complex, is potentially involved in the regulation of cilia function. May also act as a cell cycle regulator. This Homo sapiens (Human) protein is Dynein axonemal intermediate chain 7.